The chain runs to 182 residues: Troponin I, fast skeletal muscle (182 aa).

An N-acetylglycine modification is found at Gly2. The segment at 2–48 is involved in binding TNC; that stretch reads GDEEKRNRAITARRQHLKSVMLQIAATELEKEESRREAEKQNYLAEH. Phosphothreonine is present on Thr12. Residues 97 to 117 are involved in binding TNC and actin; sequence NQKLFDLRGKFKRPPLRRVRM. Phosphoserine is present on Ser118.

This sequence belongs to the troponin I family. As to quaternary structure, binds to actin and tropomyosin.

In terms of biological role, troponin I is the inhibitory subunit of troponin, the thin filament regulatory complex which confers calcium-sensitivity to striated muscle actomyosin ATPase activity. This Homo sapiens (Human) protein is Troponin I, fast skeletal muscle (TNNI2).